We begin with the raw amino-acid sequence, 747 residues long: Elongation factor G, mitochondrial (747 aa).

Residues 1-16 (MSLIMRVLNGNLSLRL) constitute a mitochondrion transit peptide. The tr-type G domain maps to 42–319 (ERIRNIGISA…AIIDYLPNPG (278 aa)). GTP is bound by residues 51-58 (AHIDSGKT), 118-122 (DTPGH), and 172-175 (NKLD).

This sequence belongs to the TRAFAC class translation factor GTPase superfamily. Classic translation factor GTPase family. EF-G/EF-2 subfamily.

It localises to the mitochondrion. It functions in the pathway protein biosynthesis; polypeptide chain elongation. Functionally, mitochondrial GTPase that catalyzes the GTP-dependent ribosomal translocation step during translation elongation. During this step, the ribosome changes from the pre-translocational (PRE) to the post-translocational (POST) state as the newly formed A-site-bound peptidyl-tRNA and P-site-bound deacylated tRNA move to the P and E sites, respectively. Catalyzes the coordinated movement of the two tRNA molecules, the mRNA and conformational changes in the ribosome. Essential during development as it acts as a retrograde signal from mitochondria to the nucleus to slow down cell proliferation if mitochondrial energy output is low. This is Elongation factor G, mitochondrial from Drosophila grimshawi (Hawaiian fruit fly).